A 605-amino-acid chain; its full sequence is Alpha-1,3-galactosidase A (605 aa).

An N-terminal signal peptide occupies residues 1 to 20 (MKKYLHILPACFLFYAAAHA). 6 PbH1 repeats span residues 256-278 (SKNITLSRLQMHYMHGLGIVSQY), 312-334 (KGKVIIDSCYFAGAQDDPVNVHG), 421-443 (TPEVEIRNSYFTRTSTRGTLVTT), 444-466 (PRKVVIENNTYYKTGMSAILIEA), 477-507 (VKDVLIKGNTFIDCAYNGGPGHAVIAIHPSN), and 517-547 (HQNIRIEDNTFRTFDYPVLYAKSTAGLLFRN).

It belongs to the glycosyl hydrolase 110 family. A subfamily.

It carries out the reaction Hydrolysis of terminal, non-reducing branched (1-&gt;3)-alpha-D-galactosidic residues, producing free D-galactose.. It catalyses the reaction Hydrolysis of terminal, non-reducing alpha-D-galactose residues in alpha-D-galactosides, including galactose oligosaccharides, galactomannans and galactolipids.. In terms of biological role, alpha-galactosidase that specifically removes branched alpha-1,3-linked galactose residues present in blood group B antigens. Has no activity toward linear alpha-1,3-linked galactose residues. The chain is Alpha-1,3-galactosidase A (glaA) from Bacteroides fragilis (strain YCH46).